Here is a 459-residue protein sequence, read N- to C-terminus: Cyclooctat-9-en-7-ol 5-monooxygenase (459 aa).

A disordered region spans residues 1 to 27 (MRERGPVTPAKSSAPPERPWTTGTAPG). Residue Cys408 participates in heme binding.

It belongs to the cytochrome P450 family. Heme serves as cofactor.

It catalyses the reaction cyclooctat-9-en-7-ol + AH2 + O2 = cyclooctat-9-ene-5,7-diol + A + H2O. Functionally, involved in the biosynthesis of cyclooctatin, a potent inhibitor of lysophospholipase. Catalyzes the stereospecific hydroxylation of cyclooctat-9-en-7-ol to form cyclooctat-9-ene-5,7-diol. The protein is Cyclooctat-9-en-7-ol 5-monooxygenase of Streptomyces melanosporofaciens.